We begin with the raw amino-acid sequence, 273 residues long: tRNA (guanine-N(7)-)-methyltransferase (273 aa).

A compositionally biased stretch (polar residues) spans 1-31 (MSQHPDINTNVDATSLTDDQKSLDTNATSGN). Positions 1-36 (MSQHPDINTNVDATSLTDDQKSLDTNATSGNEVAPD) are disordered. Glutamate 105, glutamate 130, aspartate 157, and aspartate 179 together coordinate S-adenosyl-L-methionine. Residue aspartate 179 is part of the active site. Residues lysine 183, aspartate 215, and 252–255 (TKFE) each bind substrate.

It belongs to the class I-like SAM-binding methyltransferase superfamily. TrmB family.

It carries out the reaction guanosine(46) in tRNA + S-adenosyl-L-methionine = N(7)-methylguanosine(46) in tRNA + S-adenosyl-L-homocysteine. Its pathway is tRNA modification; N(7)-methylguanine-tRNA biosynthesis. Catalyzes the formation of N(7)-methylguanine at position 46 (m7G46) in tRNA. This is tRNA (guanine-N(7)-)-methyltransferase from Psychrobacter cryohalolentis (strain ATCC BAA-1226 / DSM 17306 / VKM B-2378 / K5).